Consider the following 135-residue polypeptide: NAD(P)H-quinone oxidoreductase subunit 3 (135 aa).

A run of 3 helical transmembrane segments spans residues 15–35, 79–99, and 104–124; these read LMFV…AAAV, MFAL…PWAV, and LGLL…VALA.

Belongs to the complex I subunit 3 family. NDH-1 can be composed of about 15 different subunits; different subcomplexes with different compositions have been identified which probably have different functions.

The protein resides in the cellular thylakoid membrane. The enzyme catalyses a plastoquinone + NADH + (n+1) H(+)(in) = a plastoquinol + NAD(+) + n H(+)(out). It carries out the reaction a plastoquinone + NADPH + (n+1) H(+)(in) = a plastoquinol + NADP(+) + n H(+)(out). Functionally, NDH-1 shuttles electrons from an unknown electron donor, via FMN and iron-sulfur (Fe-S) centers, to quinones in the respiratory and/or the photosynthetic chain. The immediate electron acceptor for the enzyme in this species is believed to be plastoquinone. Couples the redox reaction to proton translocation, and thus conserves the redox energy in a proton gradient. Cyanobacterial NDH-1 also plays a role in inorganic carbon-concentration. This chain is NAD(P)H-quinone oxidoreductase subunit 3, found in Synechococcus sp. (strain CC9311).